The sequence spans 474 residues: 4-O-methyl-glucuronoyl methylesterase (474 aa).

The N-terminal stretch at 1–17 (MFKPSFVALALVSYATA) is a signal peptide. Residues 19 to 55 (ASAPQWGQCGGIGWTGPTACPSGWACQQLNAYYSQCL) enclose the CBM1 domain. The tract at residues 61-91 (APARTTAAPPPPPATTAAPPPPTTSAPTGSS) is disordered. Positions 68–84 (APPPPPATTAAPPPPTT) are enriched in pro residues. Residue N120 is glycosylated (N-linked (GlcNAc...) asparagine). A GXSYXG catalytic site motif motif is present at residues 284–289 (GCSRDG). 2 disulfides stabilise this stretch: C285/C421 and C317/C393. Residue S286 is the Nucleophile of the active site. 4 residues coordinate substrate: K290, Q332, E340, and W384. Catalysis depends on H420, which acts as the Proton donor/acceptor.

It belongs to the carbohydrate esterase 15 (CE15) family. In terms of processing, N-glycosylated.

It is found in the secreted. The enzyme catalyses a 4-O-methyl-alpha-D-glucuronosyl ester derivative + H2O = 4-O-methyl-alpha-D-glucuronate derivative + an alcohol + H(+). In terms of biological role, glucuronoyl esterase which may play a significant role in biomass degradation, as it is considered to disconnect hemicellulose from lignin through the hydrolysis of the ester bond between 4-O-methyl-D-glucuronic acid residues of glucuronoxylans and aromatic alcohols of lignin. The chain is 4-O-methyl-glucuronoyl methylesterase from Cerrena unicolor (Canker rot fungus).